A 355-amino-acid polypeptide reads, in one-letter code: uncharacterized protein (355 aa).

The protein belongs to the ycf89 family.

It is found in the plastid. It localises to the chloroplast. This is an uncharacterized protein from Trieres chinensis (Marine centric diatom).